An 88-amino-acid polypeptide reads, in one-letter code: Small ribosomal subunit protein bS20 (88 aa).

The tract at residues 1-26 (MANTAQARKRARQNTKRRQNSASQRS) is disordered. Residues 7 to 19 (ARKRARQNTKRRQ) show a composition bias toward basic residues.

This sequence belongs to the bacterial ribosomal protein bS20 family.

Binds directly to 16S ribosomal RNA. The polypeptide is Small ribosomal subunit protein bS20 (Psychrobacter arcticus (strain DSM 17307 / VKM B-2377 / 273-4)).